Reading from the N-terminus, the 681-residue chain is Chaperone protein HtpG (681 aa).

An a; substrate-binding region spans residues 1–326 (MQKGNIGVTT…SPDIPLNVSR (326 aa)). Residues 327-545 (SYLQSDSNVK…YMRRMKEMAN (219 aa)) form a b region. Residues 546-681 (IQAGMSFYGE…NFVKRSIELI (136 aa)) form a c region. Residues 589–620 (IQTEMNSVSKRRNELKDSQKDKKEEDIPTAEK) form a disordered region. Over residues 599 to 620 (RRNELKDSQKDKKEEDIPTAEK) the composition is skewed to basic and acidic residues.

The protein belongs to the heat shock protein 90 family. As to quaternary structure, homodimer.

The protein resides in the cytoplasm. Functionally, molecular chaperone. Has ATPase activity. This is Chaperone protein HtpG from Bacteroides thetaiotaomicron (strain ATCC 29148 / DSM 2079 / JCM 5827 / CCUG 10774 / NCTC 10582 / VPI-5482 / E50).